Here is a 404-residue protein sequence, read N- to C-terminus: Dihydroorotase (404 aa).

Zn(2+) is bound by residues H57 and H59. Substrate-binding positions include 59–61 (HLR) and N91. Zn(2+) is bound by residues K135, H164, H204, and D272. K135 carries the post-translational modification N6-carboxylysine. Residue D272 is part of the active site. Substrate contacts are provided by residues H276 and 286–287 (AG).

It belongs to the metallo-dependent hydrolases superfamily. DHOase family. Class I DHOase subfamily. It depends on Zn(2+) as a cofactor.

The catalysed reaction is (S)-dihydroorotate + H2O = N-carbamoyl-L-aspartate + H(+). Its pathway is pyrimidine metabolism; UMP biosynthesis via de novo pathway; (S)-dihydroorotate from bicarbonate: step 3/3. In terms of biological role, catalyzes the reversible cyclization of carbamoyl aspartate to dihydroorotate. The protein is Dihydroorotase of Pyrococcus abyssi (strain GE5 / Orsay).